A 255-amino-acid chain; its full sequence is uncharacterized protein (255 aa).

Residues 1-23 form the signal peptide; the sequence is MKRLNTLVLYISFLILIISIVAG. Cys-24 carries the N-palmitoyl cysteine lipid modification. Cys-24 carries S-diacylglycerol cysteine lipidation.

Belongs to the staphylococcal tandem lipoprotein family.

The protein resides in the cell membrane. This is an uncharacterized protein from Staphylococcus aureus (strain N315).